The primary structure comprises 773 residues: Probable C-mannosyltransferase DPY19L2 (773 aa).

The segment at 1–45 is disordered; it reads MVGPTRSKLREGSSDRPQSSCTGQARRRWSAATMEPQQERSAPQE. Residues 1–122 are Nuclear-facing; that stretch reads MVGPTRSKLR…ALQMHRFSHR (122 aa). Residues 123-143 traverse the membrane as a helical segment; it reads TLFGLAIFVGILHWLHLITLF. Residues 144 to 209 are Perinuclear space-facing; sequence ENDHHFSHLS…INTVKRFHLY (66 aa). A helical membrane pass occupies residues 210–230; the sequence is PEVVIAYWYRTIIGIMNLFGI. Residues 231–256 lie on the Nuclear side of the membrane; it reads ETKTCWNVTRMEPLNEVQSCEGLGDP. Residues 257 to 277 form a helical membrane-spanning segment; sequence ACFYIGVIFILNGLMMGLFFI. The Perinuclear space portion of the chain corresponds to 278–311; sequence YSTYLSGSQLGGLITVACYFFNHGEATRVMWTPP. Residues 312 to 332 form a helical membrane-spanning segment; the sequence is LRESFSYPFLVLQMYILTIIL. Topologically, residues 333-358 are nuclear; sequence RTSTVHKKHYMALCFSNVAFMLPWQF. Residues 359–379 traverse the membrane as a helical segment; it reads AQFILFTQIASLFPMYVVGYI. Residues 380 to 386 lie on the Perinuclear space side of the membrane; sequence EPSKFQK. Residues 387-407 traverse the membrane as a helical segment; it reads IIYVNMSSVALCFILMFGNSM. Residues 408-437 are Nuclear-facing; that stretch reads YLSSYYSSCLLVTWAIMQKKSKIQKLGGTE. Residues 438–458 traverse the membrane as a helical segment; it reads LQFWLIQGCFWWCGTIILKFL. Residues 459-507 lie on the Perinuclear space side of the membrane; the sequence is TSKICGVSDHIRLSDLIAARILRYTDFDTLIYTCAPEFDFMEQATPLRY. A helical transmembrane segment spans residues 508–528; sequence IKTLLLPLILVITYLIFKKIV. At 529-548 the chain is on the nuclear side; sequence RDIMCVLYTNTYVRKQLLDN. Residues 549 to 569 traverse the membrane as a helical segment; sequence AELIFHTLQLLAFTGLAILIM. The Perinuclear space segment spans residues 570–590; sequence RLKLFLTPHMCIMASLICSQR. The helical transmembrane segment at 591–611 threads the bilayer; sequence LFGWLFCRIHFENVVFGILTM. At 612–773 the chain is on the nuclear side; it reads MSIQGCANLH…NSMYRVLKIN (162 aa).

The protein belongs to the dpy-19 family. In terms of assembly, interacts with FAM209. In terms of tissue distribution, predominantly expressed in testis. Present in testis but absent from epididymal sperm (at protein level).

Its subcellular location is the nucleus inner membrane. Functionally, probable C-mannosyltransferase that mediates C-mannosylation of tryptophan residues on target proteins. In terms of biological role, required during spermatogenesis for sperm head elongation and acrosome formation. Also plays a role in acrosome attachment to the nuclear envelope. The protein is Probable C-mannosyltransferase DPY19L2 (Dpy19l2) of Mus musculus (Mouse).